The primary structure comprises 218 residues: MAQYSQTLRSSGFTSTVGLTDIEGAKTVARRIFENYDKGRKGRIENTDCVPMITEAYKSFNSFFAPSSDDIKAYHRVLDRNGDGIVTYQDIEELCIRYLTGTTVQRTIVTEEKVKKSSKPKYNPEVEAKLDVARRLFKRYDKDGSGQLQDDEIAGLLKDTYAEMGMSNFTPTKEDVKIWLQMADTNSDGSVSLEEYEDLIIKSLQKAGIRVEKQSLVF.

EF-hand domains follow at residues Gly24–Ser59, Pro66–Gly101, Ala128–Glu163, and Pro171–Lys206. The Ca(2+) site is built by Asp37, Arg43, Asp48, Asp79, Asn81, Asp83, Asp90, Asp141, Asp143, Ser145, Gln147, Glu152, Asp184, Asn186, Asp188, Ser190, and Glu195.

In terms of biological role, expected to play a crucial role in calcium-dependent regulation of ciliary movement. This is 25 kDa calcium-binding protein from Tetrahymena thermophila.